Here is a 413-residue protein sequence, read N- to C-terminus: Multifunctional CCA protein (413 aa).

Residues Gly-8 and Arg-11 each coordinate ATP. 2 residues coordinate CTP: Gly-8 and Arg-11. Positions 21 and 23 each coordinate Mg(2+). The ATP site is built by Arg-91, Arg-143, and Arg-146. CTP-binding residues include Arg-91, Arg-143, and Arg-146. Residues 232–333 form the HD domain; sequence TGVHVMMVVD…VRFFERTDAL (102 aa).

Belongs to the tRNA nucleotidyltransferase/poly(A) polymerase family. Bacterial CCA-adding enzyme type 1 subfamily. As to quaternary structure, monomer. Can also form homodimers and oligomers. Mg(2+) is required as a cofactor. It depends on Ni(2+) as a cofactor.

The enzyme catalyses a tRNA precursor + 2 CTP + ATP = a tRNA with a 3' CCA end + 3 diphosphate. It carries out the reaction a tRNA with a 3' CCA end + 2 CTP + ATP = a tRNA with a 3' CCACCA end + 3 diphosphate. In terms of biological role, catalyzes the addition and repair of the essential 3'-terminal CCA sequence in tRNAs without using a nucleic acid template. Adds these three nucleotides in the order of C, C, and A to the tRNA nucleotide-73, using CTP and ATP as substrates and producing inorganic pyrophosphate. tRNA 3'-terminal CCA addition is required both for tRNA processing and repair. Also involved in tRNA surveillance by mediating tandem CCA addition to generate a CCACCA at the 3' terminus of unstable tRNAs. While stable tRNAs receive only 3'-terminal CCA, unstable tRNAs are marked with CCACCA and rapidly degraded. The sequence is that of Multifunctional CCA protein from Burkholderia multivorans (strain ATCC 17616 / 249).